A 566-amino-acid chain; its full sequence is Type 3 secretion system secretin (566 aa).

Residues 1-22 form the signal peptide; sequence MKKFNIKSLTLLIVLLPLIVNA.

The protein belongs to the bacterial secretin family. T3SS SctC subfamily. The core secretion machinery of the T3SS is composed of approximately 20 different proteins, including cytoplasmic components, a base, an export apparatus and a needle. This subunit is part of the base, which anchors the injectisome in the bacterial cell envelope. Forms a stable homooligomeric complex.

It localises to the cell outer membrane. Its function is as follows. Component of the type III secretion system (T3SS), also called injectisome, which is used to inject bacterial effector proteins into eukaryotic host cells. Forms a ring-shaped multimeric structure with an apparent central pore in the outer membrane. The protein is Type 3 secretion system secretin of Shigella sonnei.